The following is a 203-amino-acid chain: Protein GrpE (203 aa).

Residues 1-20 (MSSKEQNVHEEQVSKEKEGM) show a composition bias toward basic and acidic residues. The segment at 1 to 38 (MSSKEQNVHEEQVSKEKEGMESVMNESQEQVKSEDAQA) is disordered.

It belongs to the GrpE family. Homodimer.

It is found in the cytoplasm. Participates actively in the response to hyperosmotic and heat shock by preventing the aggregation of stress-denatured proteins, in association with DnaK and GrpE. It is the nucleotide exchange factor for DnaK and may function as a thermosensor. Unfolded proteins bind initially to DnaJ; upon interaction with the DnaJ-bound protein, DnaK hydrolyzes its bound ATP, resulting in the formation of a stable complex. GrpE releases ADP from DnaK; ATP binding to DnaK triggers the release of the substrate protein, thus completing the reaction cycle. Several rounds of ATP-dependent interactions between DnaJ, DnaK and GrpE are required for fully efficient folding. This chain is Protein GrpE, found in Proteus mirabilis (strain HI4320).